Reading from the N-terminus, the 138-residue chain is Large ribosomal subunit protein uL16 (138 aa).

A compositionally biased stretch (basic residues) spans 1 to 15; the sequence is MLSPKKVKYRKKQRG. The interval 1 to 21 is disordered; it reads MLSPKKVKYRKKQRGRLSGEA.

Belongs to the universal ribosomal protein uL16 family. In terms of assembly, part of the 50S ribosomal subunit.

Its function is as follows. Binds 23S rRNA and is also seen to make contacts with the A and possibly P site tRNAs. This is Large ribosomal subunit protein uL16 from Borrelia garinii subsp. bavariensis (strain ATCC BAA-2496 / DSM 23469 / PBi) (Borreliella bavariensis).